The following is a 289-amino-acid chain: Dihydropteroate synthase (289 aa).

The Pterin-binding domain maps to 28 to 282; sequence TYVMGILNTT…DVEAMAQICK (255 aa). A Mg(2+)-binding site is contributed by Asn35. Residues Thr75, Asp109, Asn128, Asp199, Lys235, and 270–272 contribute to the (7,8-dihydropterin-6-yl)methyl diphosphate site; that span reads RVH.

The protein belongs to the DHPS family. Mg(2+) serves as cofactor.

It catalyses the reaction (7,8-dihydropterin-6-yl)methyl diphosphate + 4-aminobenzoate = 7,8-dihydropteroate + diphosphate. The protein operates within cofactor biosynthesis; tetrahydrofolate biosynthesis; 7,8-dihydrofolate from 2-amino-4-hydroxy-6-hydroxymethyl-7,8-dihydropteridine diphosphate and 4-aminobenzoate: step 1/2. In terms of biological role, catalyzes the condensation of para-aminobenzoate (pABA) with 6-hydroxymethyl-7,8-dihydropterin diphosphate (DHPt-PP) to form 7,8-dihydropteroate (H2Pte), the immediate precursor of folate derivatives. The sequence is that of Dihydropteroate synthase (folP) from Synechocystis sp. (strain ATCC 27184 / PCC 6803 / Kazusa).